We begin with the raw amino-acid sequence, 190 residues long: Threonylcarbamoyl-AMP synthase (190 aa).

One can recognise a YrdC-like domain in the interval 7-190; the sequence is IGSIAAAVDL…ALTGELFRQG (184 aa).

This sequence belongs to the SUA5 family. TsaC subfamily.

It localises to the cytoplasm. The catalysed reaction is L-threonine + hydrogencarbonate + ATP = L-threonylcarbamoyladenylate + diphosphate + H2O. In terms of biological role, required for the formation of a threonylcarbamoyl group on adenosine at position 37 (t(6)A37) in tRNAs that read codons beginning with adenine. Catalyzes the conversion of L-threonine, HCO(3)(-)/CO(2) and ATP to give threonylcarbamoyl-AMP (TC-AMP) as the acyladenylate intermediate, with the release of diphosphate. The polypeptide is Threonylcarbamoyl-AMP synthase (Salmonella typhimurium (strain LT2 / SGSC1412 / ATCC 700720)).